Here is a 500-residue protein sequence, read N- to C-terminus: Lysine--tRNA ligase (500 aa).

Mg(2+)-binding residues include E410 and E417.

This sequence belongs to the class-II aminoacyl-tRNA synthetase family. Homodimer. Mg(2+) serves as cofactor.

It localises to the cytoplasm. The enzyme catalyses tRNA(Lys) + L-lysine + ATP = L-lysyl-tRNA(Lys) + AMP + diphosphate. The polypeptide is Lysine--tRNA ligase (Pseudomonas putida (strain ATCC 47054 / DSM 6125 / CFBP 8728 / NCIMB 11950 / KT2440)).